The following is a 375-amino-acid chain: Queuine tRNA-ribosyltransferase (375 aa).

Aspartate 90 acts as the Proton acceptor in catalysis. Residues 90–94 (DSGGF), aspartate 144, glutamine 193, and glycine 220 contribute to the substrate site. Residues 251 to 257 (GVGTPED) are RNA binding. Aspartate 270 (nucleophile) is an active-site residue. The tract at residues 275-279 (TRNAR) is RNA binding; important for wobble base 34 recognition. Positions 308, 310, 313, and 339 each coordinate Zn(2+).

This sequence belongs to the queuine tRNA-ribosyltransferase family. As to quaternary structure, homodimer. Within each dimer, one monomer is responsible for RNA recognition and catalysis, while the other monomer binds to the replacement base PreQ1. It depends on Zn(2+) as a cofactor.

It catalyses the reaction 7-aminomethyl-7-carbaguanine + guanosine(34) in tRNA = 7-aminomethyl-7-carbaguanosine(34) in tRNA + guanine. It participates in tRNA modification; tRNA-queuosine biosynthesis. Functionally, catalyzes the base-exchange of a guanine (G) residue with the queuine precursor 7-aminomethyl-7-deazaguanine (PreQ1) at position 34 (anticodon wobble position) in tRNAs with GU(N) anticodons (tRNA-Asp, -Asn, -His and -Tyr). Catalysis occurs through a double-displacement mechanism. The nucleophile active site attacks the C1' of nucleotide 34 to detach the guanine base from the RNA, forming a covalent enzyme-RNA intermediate. The proton acceptor active site deprotonates the incoming PreQ1, allowing a nucleophilic attack on the C1' of the ribose to form the product. After dissociation, two additional enzymatic reactions on the tRNA convert PreQ1 to queuine (Q), resulting in the hypermodified nucleoside queuosine (7-(((4,5-cis-dihydroxy-2-cyclopenten-1-yl)amino)methyl)-7-deazaguanosine). This is Queuine tRNA-ribosyltransferase from Herminiimonas arsenicoxydans.